Reading from the N-terminus, the 357-residue chain is Ribosomal RNA large subunit methyltransferase M (357 aa).

S-adenosyl-L-methionine-binding positions include S190, A223–G226, D242, D262, and D278. K307 (proton acceptor) is an active-site residue.

It belongs to the class I-like SAM-binding methyltransferase superfamily. RNA methyltransferase RlmE family. RlmM subfamily. In terms of assembly, monomer.

The protein localises to the cytoplasm. It carries out the reaction cytidine(2498) in 23S rRNA + S-adenosyl-L-methionine = 2'-O-methylcytidine(2498) in 23S rRNA + S-adenosyl-L-homocysteine + H(+). Functionally, catalyzes the 2'-O-methylation at nucleotide C2498 in 23S rRNA. The chain is Ribosomal RNA large subunit methyltransferase M from Chromohalobacter salexigens (strain ATCC BAA-138 / DSM 3043 / CIP 106854 / NCIMB 13768 / 1H11).